The chain runs to 183 residues: uncharacterized protein (183 aa).

Residues 1-23 (MSAFKKSLLVAGVAMILSNNVFA) form the signal peptide. An intrachain disulfide couples Cys41 to Cys80.

It belongs to the fimbrial protein family.

The protein localises to the fimbrium. This is an uncharacterized protein from Escherichia coli (strain K12).